Consider the following 421-residue polypeptide: NADH-dependent phenylglyoxylate dehydrogenase subunit epsilon (421 aa).

FAD is bound by residues 15–18 (SSHA), 39–40 (TR), and 279–297 (ATAQ…NAIL).

It belongs to the FAD-dependent oxidoreductase family. Dimer of heteropentamers composed of an alpha (PadG), a beta (PadI), a gamma (PadE), a delta (PadF) and an epsilon (PadH) subunit. Requires FAD as cofactor.

The enzyme catalyses phenylglyoxylate + NAD(+) + CoA = benzoyl-CoA + CO2 + NADH. Its activity is regulated as follows. Activated by magnesium ions and thiamine diphosphate. Its function is as follows. Involved in the anaerobic metabolism of phenylalanine and phenylacetate. Catalyzes the oxidative decarboxylation of phenylglyoxylate to benzoyl-CoA and CO(2). It can also react slowly with 2-oxo-3-methylbutanoate and use different electron acceptors such as benzyl viologen, methyl viologen, FAD or FMN, but NAD seems to be the physiological electron acceptor. Also catalyzes an isotope exchange between CO(2) and the carboxyl group which proves partial or complete reversibility of the oxidative decarboxylation reaction. This Aromatoleum evansii (Azoarcus evansii) protein is NADH-dependent phenylglyoxylate dehydrogenase subunit epsilon (padH).